Here is a 212-residue protein sequence, read N- to C-terminus: ATP phosphoribosyltransferase (212 aa).

It belongs to the ATP phosphoribosyltransferase family. Short subfamily. In terms of assembly, heteromultimer composed of HisG and HisZ subunits.

It localises to the cytoplasm. It carries out the reaction 1-(5-phospho-beta-D-ribosyl)-ATP + diphosphate = 5-phospho-alpha-D-ribose 1-diphosphate + ATP. It functions in the pathway amino-acid biosynthesis; L-histidine biosynthesis; L-histidine from 5-phospho-alpha-D-ribose 1-diphosphate: step 1/9. Its function is as follows. Catalyzes the condensation of ATP and 5-phosphoribose 1-diphosphate to form N'-(5'-phosphoribosyl)-ATP (PR-ATP). Has a crucial role in the pathway because the rate of histidine biosynthesis seems to be controlled primarily by regulation of HisG enzymatic activity. This is ATP phosphoribosyltransferase from Clostridium novyi (strain NT).